The primary structure comprises 36 residues: Serine protease inhibitor 2 (36 aa).

The Pacifastin domain maps to 1–36; it reads EISCEPGTTFQDKCNTCRCGKDGKSAAGCTLKACPQ. Intrachain disulfides connect Cys-4–Cys-19, Cys-14–Cys-34, and Cys-17–Cys-29.

Belongs to the protease inhibitor I19 family. As to expression, expressed in hemolymph.

The protein localises to the secreted. In terms of biological role, probable serine protease inhibitor. In Melanoplus sanguinipes (Migratory grasshopper), this protein is Serine protease inhibitor 2.